A 447-amino-acid chain; its full sequence is Coagulation factor VII (447 aa).

The first 23 residues, 1-23 (MLSQAWALALLCFLLSLWGSLPA), serve as a signal peptide directing secretion. Residues 24-40 (VFLPQEQALSILHRPRR) constitute a propeptide that is removed on maturation. The Gla domain occupies 41 to 85 (ANGFLEELLPGSLERECREELCSFEEAHEIFRNEERTRQFWVSYN). 4-carboxyglutamate occurs at positions 46, 47, 54, 56, 59, 60, 65, 66, 69, 74, and 75. Residues Cys-57 and Cys-62 are joined by a disulfide bond. In terms of domain architecture, EGF-like 1; calcium-binding spans 86–122 (DGDQCASSPCQNGGSCEDQLRSYICFCPDGFEGRNCE). 10 disulfides stabilise this stretch: Cys-90-Cys-101, Cys-95-Cys-110, Cys-112-Cys-121, Cys-131-Cys-142, Cys-138-Cys-152, Cys-154-Cys-167, Cys-175-Cys-302, Cys-199-Cys-204, Cys-218-Cys-234, and Cys-350-Cys-369. O-linked (Glc...) serine glycosylation occurs at Ser-92. The O-linked (Glc...) serine; alternate glycan is linked to Ser-92. Residue Ser-92 is glycosylated (O-linked (Xyl...) serine; alternate). An O-linked (Fuc) serine glycan is attached at Ser-100. Residues 127-168 (SQLICANDNGGCEQYCGADPGAGRFCWCHEGYALQADGVSCA) form the EGF-like 2 domain. N-linked (GlcNAc...) asparagine glycosylation occurs at Asn-185. The 240-residue stretch at 193 to 432 (IVGGHVCPKG…YTAWLRQLMG (240 aa)) folds into the Peptidase S1 domain. The Charge relay system role is filled by His-233. Asn-243 is a glycosylation site (N-linked (GlcNAc...) asparagine). The active-site Charge relay system is the Asp-282. Asp-378 serves as a coordination point for substrate. The cysteines at positions 380 and 408 are disulfide-linked. The active-site Charge relay system is the Ser-384.

The protein belongs to the peptidase S1 family. Heterodimer of a light chain and a heavy chain linked by a disulfide bond. In terms of processing, the vitamin K-dependent, enzymatic carboxylation of some glutamate residues allows the modified protein to bind calcium. O-glycosylated. O-fucosylated by POFUT1 on a conserved serine or threonine residue found in the consensus sequence C2-X(4,5)-[S/T]-C3 of EGF domains, where C2 and C3 are the second and third conserved cysteines. Post-translationally, can be either O-glucosylated or O-xylosylated at Ser-92 by POGLUT1. In terms of tissue distribution, plasma.

Its subcellular location is the secreted. It catalyses the reaction Selective cleavage of Arg-|-Ile bond in factor X to form factor Xa.. Its function is as follows. Initiates the extrinsic pathway of blood coagulation. Serine protease that circulates in the blood in a zymogen form. Factor VII is converted to factor VIIa by factor Xa, factor XIIa, factor IXa, or thrombin by minor proteolysis. In the presence of tissue factor and calcium ions, factor VIIa then converts factor X to factor Xa by limited proteolysis. Factor VIIa also converts factor IX to factor IXa in the presence of tissue factor and calcium. The sequence is that of Coagulation factor VII (F7) from Bos taurus (Bovine).